Reading from the N-terminus, the 804-residue chain is DNA mismatch repair protein MutS (804 aa).

614 to 621 (GPNMAGKS) is an ATP binding site.

This sequence belongs to the DNA mismatch repair MutS family.

Its function is as follows. This protein is involved in the repair of mismatches in DNA. It is possible that it carries out the mismatch recognition step. This protein has a weak ATPase activity. The polypeptide is DNA mismatch repair protein MutS (Ehrlichia chaffeensis (strain ATCC CRL-10679 / Arkansas)).